The following is a 206-amino-acid chain: Pro-glucagon (206 aa).

Positions 1-22 are cleaved as a signal peptide; the sequence is MKMKSIYFIAGLLLMIVQGSWQ. Residues 27–57 form a disordered region; sequence DTEEKSRSFKASQSEPLDESRQLNEVKRHSQ. The segment covering 44–54 has biased composition (basic and acidic residues); the sequence is DESRQLNEVKR. A propeptide spanning residues 86 to 109 is cleaved from the precursor; that stretch reads NGQQGQEDKENDKFPDQLSSNAIS. R147 is subject to Arginine amide. Propeptides lie at residues 151 to 163 and 199 to 206; these read DFPE…EEMG and RDLLGEYQ.

Belongs to the glucagon family. Post-translationally, proglucagon is post-translationally processed in a tissue-specific manner in pancreatic A cells and intestinal L cells. In pancreatic A cells, the major bioactive hormone is glucagon cleaved by PCSK2/PC2. In the intestinal L cells PCSK1/PC1 liberates GLP-1 and GLP-2. GLP-1 is further N-terminally truncated by post-translational processing in the intestinal L cells resulting in GLP-1(7-37) GLP-1-(7-36)amide.

The protein resides in the secreted. Plays a key role in glucose metabolism and homeostasis. Regulates blood glucose by increasing gluconeogenesis and decreasing glycolysis. In terms of biological role, potent stimulator of glucose-dependent insulin release. Plays important roles on gastric motility and the suppression of plasma glucagon levels. May be involved in the suppression of satiety and stimulation of glucose disposal in peripheral tissues, independent of the actions of insulin. Has growth-promoting activities on intestinal epithelium. May also regulate the hypothalamic pituitary axis (HPA) via effects on LH, TSH, CRH, oxytocin, and vasopressin secretion. Increases islet mass through stimulation of islet neogenesis and pancreatic beta cell proliferation. Its function is as follows. Stimulates intestinal growth and up-regulates villus height in the small intestine, concomitant with increased crypt cell proliferation and decreased enterocyte apoptosis. The gastrointestinal tract, from the stomach to the colon is the principal target for GLP-2 action. Plays a key role in nutrient homeostasis, enhancing nutrient assimilation through enhanced gastrointestinal function, as well as increasing nutrient disposal. Stimulates intestinal glucose transport and decreases mucosal permeability. This chain is Pro-glucagon (GCG), found in Gallus gallus (Chicken).